Here is a 287-residue protein sequence, read N- to C-terminus: Ribonuclease HII (287 aa).

One can recognise an RNase H type-2 domain in the interval 61–287 (ALQIGVDEAG…FAPVRKALES (227 aa)). Residues D67, E68, and D186 each coordinate a divalent metal cation.

This sequence belongs to the RNase HII family. The cofactor is Mn(2+). Requires Mg(2+) as cofactor.

The protein resides in the cytoplasm. The enzyme catalyses Endonucleolytic cleavage to 5'-phosphomonoester.. Its function is as follows. Endonuclease that specifically degrades the RNA of RNA-DNA hybrids. The sequence is that of Ribonuclease HII from Psychrobacter arcticus (strain DSM 17307 / VKM B-2377 / 273-4).